We begin with the raw amino-acid sequence, 540 residues long: Putative cysteine ligase BshC (540 aa).

The stretch at 457–477 (EKNRAFIQGQIAFLKERMERE) forms a coiled coil.

Belongs to the BshC family.

Its function is as follows. Involved in bacillithiol (BSH) biosynthesis. May catalyze the last step of the pathway, the addition of cysteine to glucosamine malate (GlcN-Mal) to generate BSH. This Shouchella clausii (strain KSM-K16) (Alkalihalobacillus clausii) protein is Putative cysteine ligase BshC.